The following is a 292-amino-acid chain: Leucine-rich repeat-containing protein 10B (292 aa).

A disordered region spans residues methionine 1–arginine 20. Residues threonine 7 to glutamate 16 show a composition bias toward acidic residues. LRR repeat units follow at residues glycine 22 to leucine 43, arginine 45 to leucine 66, glutamate 68 to proline 90, arginine 91 to leucine 112, serine 114 to valine 136, alanine 137 to methionine 158, glycine 160 to methionine 181, arginine 183 to arginine 204, and alanine 205 to valine 226. Residues arginine 236–glutamate 261 form a disordered region.

The chain is Leucine-rich repeat-containing protein 10B (LRRC10B) from Homo sapiens (Human).